The sequence spans 527 residues: Gustatory receptor for bitter taste 66a (527 aa).

At M1–N46 the chain is on the cytoplasmic side. A helical transmembrane segment spans residues G47–Y67. Residues S68–Q80 lie on the Extracellular side of the membrane. Residues S81–S101 form a helical membrane-spanning segment. Residues D102–R144 are Cytoplasmic-facing. A helical membrane pass occupies residues I145–L165. The Extracellular segment spans residues V166–L174. A helical membrane pass occupies residues L175–V195. The Cytoplasmic portion of the chain corresponds to S196–P345. The helical transmembrane segment at I346–C366 threads the bilayer. Residues A367–N382 are Extracellular-facing. Residues P383–L403 traverse the membrane as a helical segment. Over S404 to T460 the chain is Cytoplasmic. Residues L461–A481 traverse the membrane as a helical segment. At A482 to V527 the chain is on the extracellular side. 2 N-linked (GlcNAc...) asparagine glycosylation sites follow: N496 and N510.

Belongs to the insect chemoreceptor superfamily. Gustatory receptor (GR) family. Gr66a subfamily. In terms of tissue distribution, taste hairs in labial palps, labral and cibarial sense organs and forelegs. In larvae, is expressed in neurons of the terminal external chemosensory organ, as well as in the dorsal, ventral, and posterior pharyngeal sense organs.

It localises to the cell membrane. Its function is as follows. Gustatory receptor required for response to the bitter in taste neurons. Gr66a cells respond to bitter compounds such as caffeine, theophylline, threonine or valine. Flies avoid bitter substances, suggesting that Gr66a neuron activity is sufficient to mediate avoidance behavior. Required for sensing and avoiding N,N-Diethyl-meta-toluamide (DEET), the most widely used insect repellent worldwide, as well as to L-canavanine, a plant-derived insecticide. Gr66a neurons are also involved in the sex-specific perception of molecules inducing male avoidance behavior, probably through sensing 7-tricosene (7-T), a male cuticular pheromone and leading to inhibition of male-male courtship. Finally, also plays a role in oviposition behavior, in which females evaluate their environment and choose to lay eggs on substrates they may find aversive in other contexts. The polypeptide is Gustatory receptor for bitter taste 66a (Gr66a) (Drosophila melanogaster (Fruit fly)).